The following is a 404-amino-acid chain: G-protein coupled receptor 143 (404 aa).

The Extracellular segment spans residues 1–28; sequence MASPRLGTFCCPTRDAATQLVLSFQPRA. Residues 29–49 traverse the membrane as a helical segment; the sequence is FHALCLGSGGLRLALGLLQLL. At 50–78 the chain is on the cytoplasmic side; the sequence is PGRRPAGPGSPATSPPASVRILRAAAACD. A helical transmembrane segment spans residues 79 to 99; sequence LLGCLGMVIRSTVWLGFPNFV. Topologically, residues 100-124 are extracellular; it reads DSVSDMNHTEIWPAAFCVGSAMWIQ. An N-linked (GlcNAc...) asparagine glycan is attached at asparagine 106. The helical transmembrane segment at 125-145 threads the bilayer; it reads LLYSACFWWLFCYAVDAYLVI. Residues 146-149 lie on the Cytoplasmic side of the membrane; sequence RRSA. Residues 150–170 traverse the membrane as a helical segment; the sequence is GLSTILLYHIMAWGLATLLCV. At 171–191 the chain is on the extracellular side; it reads EGAAMLYYPSVSRCERGLDHA. The chain crosses the membrane as a helical span at residues 192–212; sequence IPHYVTMYLPLLLVLVANPIL. Over 213-248 the chain is Cytoplasmic; the sequence is FQKTVTAVASLLKGRQGIYTENERRMGAVIKIRFFK. Residues 221–238 form a necessary for its G protein-activation ability and normal distribution of melanosomes region; sequence ASLLKGRQGIYTENERRM. Positions 222–231 match the lysosomal/melanosomal membrane localization signal motif; sequence SLLKGRQGIY. A helical transmembrane segment spans residues 249-269; the sequence is IMLVLIICWLSNIINESLLFY. Residues 270–292 lie on the Extracellular side of the membrane; that stretch reads LEMQTDINGGSLKPVRTAAKTTW. A helical transmembrane segment spans residues 293 to 313; it reads FIMGILNPAQGFLLSLAFYGW. Over 314–404 the chain is Cytoplasmic; the sequence is TGCSLGFQSP…DPALPTHGDL (91 aa). A lysosomal/melanosomal membrane localization signal motif is present at residues 329–330; it reads WE. The disordered stretch occupies residues 338–404; that stretch reads EGAHPSPLMP…DPALPTHGDL (67 aa). The span at 355-366 shows a compositional bias: polar residues; it reads KVSQVGGQTSDE.

Belongs to the G-protein coupled receptor OA family. In terms of assembly, interacts with heterotrimeric G(i) proteins. Interacts with ARRB1 and ARRB2. Interacts with MLANA. In terms of processing, glycosylated. Post-translationally, phosphorylated. Expressed at high levels in the retina, including the retinal pigment epithelium (RPE), and in melanocytes. Weak expression is observed in brain and adrenal gland.

Its subcellular location is the melanosome membrane. The protein localises to the lysosome membrane. The protein resides in the apical cell membrane. Functionally, receptor for tyrosine, L-DOPA and dopamine. After binding to L-DOPA, stimulates Ca(2+) influx into the cytoplasm, increases secretion of the neurotrophic factor SERPINF1 and relocalizes beta arrestin at the plasma membrane; this ligand-dependent signaling occurs through a G(q)-mediated pathway in melanocytic cells. Its activity is mediated by G proteins which activate the phosphoinositide signaling pathway. Also plays a role as an intracellular G protein-coupled receptor involved in melanosome biogenesis, organization and transport. This chain is G-protein coupled receptor 143 (GPR143), found in Homo sapiens (Human).